The chain runs to 311 residues: Methionyl-tRNA formyltransferase (311 aa).

109–112 (SLLP) is a (6S)-5,6,7,8-tetrahydrofolate binding site.

Belongs to the Fmt family.

The enzyme catalyses L-methionyl-tRNA(fMet) + (6R)-10-formyltetrahydrofolate = N-formyl-L-methionyl-tRNA(fMet) + (6S)-5,6,7,8-tetrahydrofolate + H(+). Attaches a formyl group to the free amino group of methionyl-tRNA(fMet). The formyl group appears to play a dual role in the initiator identity of N-formylmethionyl-tRNA by promoting its recognition by IF2 and preventing the misappropriation of this tRNA by the elongation apparatus. In Solibacter usitatus (strain Ellin6076), this protein is Methionyl-tRNA formyltransferase.